A 171-amino-acid chain; its full sequence is MTSPQKAILAGGCFWGMQDLIRKQPGVIATRVGYSGGDVANATYRNHGTHAEAVEIIFDPQATDYRTLLEFFFQIHDPTTPNRQGNDRGTSYRSAIYYLDDEQKRVALDTIADVEASGLWPGKVVTEVSPAGDFWEAEPEHQHYLQRYPSGYTCHFIRPGWKLPRRATAGQ.

Residue C13 is part of the active site.

This sequence belongs to the MsrA Met sulfoxide reductase family.

The catalysed reaction is L-methionyl-[protein] + [thioredoxin]-disulfide + H2O = L-methionyl-(S)-S-oxide-[protein] + [thioredoxin]-dithiol. The enzyme catalyses [thioredoxin]-disulfide + L-methionine + H2O = L-methionine (S)-S-oxide + [thioredoxin]-dithiol. Its function is as follows. Has an important function as a repair enzyme for proteins that have been inactivated by oxidation. Catalyzes the reversible oxidation-reduction of methionine sulfoxide in proteins to methionine. This chain is Peptide methionine sulfoxide reductase MsrA, found in Mycobacterium ulcerans (strain Agy99).